The primary structure comprises 180 residues: Large ribosomal subunit protein uL5 (180 aa).

It belongs to the universal ribosomal protein uL5 family. Part of the 50S ribosomal subunit; part of the 5S rRNA/L5/L18/L25 subcomplex. Contacts the 5S rRNA and the P site tRNA. Forms a bridge to the 30S subunit in the 70S ribosome.

In terms of biological role, this is one of the proteins that bind and probably mediate the attachment of the 5S RNA into the large ribosomal subunit, where it forms part of the central protuberance. In the 70S ribosome it contacts protein S13 of the 30S subunit (bridge B1b), connecting the 2 subunits; this bridge is implicated in subunit movement. Contacts the P site tRNA; the 5S rRNA and some of its associated proteins might help stabilize positioning of ribosome-bound tRNAs. This Lacticaseibacillus casei (strain BL23) (Lactobacillus casei) protein is Large ribosomal subunit protein uL5.